The chain runs to 416 residues: Lipase A (416 aa).

A signal peptide spans 1-32 (MRLAPQKPLLLSTVLHLLLSIWMLGFASLAGA). Intrachain disulfides connect C67/C391 and C177/C180. N179 is a glycosylation site (N-linked (GlcNAc...) asparagine). The active-site Nucleophile is S219. Active-site charge relay system residues include D287 and H381.

It belongs to the AB hydrolase superfamily. Lipase family. Post-translationally, glycosylated.

The protein resides in the secreted. It carries out the reaction Deacetylation of xylans and xylo-oligosaccharides.. The catalysed reaction is a triacylglycerol + H2O = a diacylglycerol + a fatty acid + H(+). Its function is as follows. Lipolytic enzyme that possesses both lipase and acetylxylan esterase activity. Active towards p-nitrophenol esters of various carbon chain length with preference for medium-chain fatty acids (C-8). Also highly active on the acetylated compounds xylose tetra-acetate and oat spelt xylan. In Sodiomyces alcalophilus (Acremonium alcalophilum), this protein is Lipase A.